A 311-amino-acid chain; its full sequence is Aspartate carbamoyltransferase catalytic subunit (311 aa).

2 residues coordinate carbamoyl phosphate: Arg-55 and Thr-56. Position 85 (Lys-85) interacts with L-aspartate. Residues Arg-106, His-135, and Gln-138 each coordinate carbamoyl phosphate. L-aspartate contacts are provided by Arg-168 and Arg-230. Positions 268 and 269 each coordinate carbamoyl phosphate.

This sequence belongs to the aspartate/ornithine carbamoyltransferase superfamily. ATCase family. As to quaternary structure, heterododecamer (2C3:3R2) of six catalytic PyrB chains organized as two trimers (C3), and six regulatory PyrI chains organized as three dimers (R2).

It catalyses the reaction carbamoyl phosphate + L-aspartate = N-carbamoyl-L-aspartate + phosphate + H(+). It functions in the pathway pyrimidine metabolism; UMP biosynthesis via de novo pathway; (S)-dihydroorotate from bicarbonate: step 2/3. In terms of biological role, catalyzes the condensation of carbamoyl phosphate and aspartate to form carbamoyl aspartate and inorganic phosphate, the committed step in the de novo pyrimidine nucleotide biosynthesis pathway. The sequence is that of Aspartate carbamoyltransferase catalytic subunit from Yersinia pseudotuberculosis serotype O:1b (strain IP 31758).